The chain runs to 727 residues: Putative ATP-dependent RNA helicase DHX15 (727 aa).

A disordered region spans residues 1–41 (MSKRKHESSDSNKKAMKKQQNKIEEEEEEITNTTTTTTTTN). The segment covering 31–41 (TNTTTTTTTTN) has biased composition (low complexity). The region spanning 87–251 (IKVIKENQVV…FENAPLIKVP (165 aa)) is the Helicase ATP-binding domain. 100 to 107 (GETGSGKT) contacts ATP. Positions 198–201 (DEAH) match the DEAH box motif. A Helicase C-terminal domain is found at 273 to 445 (AVRTVIDIHT…SVVLQLLKLG (173 aa)).

It belongs to the DEAD box helicase family. DEAH subfamily. DDX15/PRP43 sub-subfamily.

It localises to the nucleus. The catalysed reaction is ATP + H2O = ADP + phosphate + H(+). Functionally, pre-mRNA processing factor involved in disassembly of spliceosomes after the release of mature mRNA. This is Putative ATP-dependent RNA helicase DHX15 (dhx15) from Dictyostelium discoideum (Social amoeba).